The chain runs to 704 residues: Probable ferric reduction oxidase 1 (704 aa).

At 1-16 (MGVGEMNKEVIDKVIK) the chain is on the cytoplasmic side. A helical transmembrane segment spans residues 17-36 (FLMMVILMGTIVIWIMMPTS). Residues 37–62 (TYKEIWLTSMRAKLGKSIYYGRPGVN) lie on the Lumenal side of the membrane. The helical transmembrane segment at 63–81 (LLVYMFPMILLAFLGCIYL) threads the bilayer. Topologically, residues 82–115 (HLKKSTTVNQFNSGVEKKRAKFGALRRPMLVNGP) are cytoplasmic. Residues 116–139 (LGIVTVTEVMFLTMFMALLLWSLA) traverse the membrane as a helical segment. The Lumenal portion of the chain corresponds to 140–207 (NYMYRTFVNV…VGLTSESSIK (68 aa)). One can recognise a Ferric oxidoreductase domain in the interval 174–294 (GIVGNICLAF…YLYIVFMLFF (121 aa)). The helical transmembrane segment at 208–231 (YHIWLGHLVMIIFTSHGLCYFIYW) threads the bilayer. Heme-binding residues include H209 and H223. Over 232–282 (ISKNQLVSKMLEWDRTAVSNLAGEIALVAGLMMWVTTYPKIRRRLFEVFFY) the chain is Cytoplasmic. Residues 283–307 (SHYLYIVFMLFFVFHVGISHALIPL) traverse the membrane as a helical segment. Residues H284 and H297 each contribute to the heme site. Over 308–329 (PGFYIFLVDRFLRFLQSRNNVK) the chain is Lumenal. The region spanning 323–430 (QSRNNVKLVS…EGPYGPSSTD (108 aa)) is the FAD-binding FR-type domain. A helical transmembrane segment spans residues 330–350 (LVSARVLPCDTVELNFSKNPM). Residues 351 to 550 (LMYSPTSTMF…PISPILGPNS (200 aa)) lie on the Cytoplasmic side of the membrane. An FAD-binding site is contributed by 372–375 (HPFT). 422-425 (GPYG) provides a ligand contact to NAD(+). Residues 551–573 (WLCLAAILSSSFMIFIVIIAIIT) traverse the membrane as a helical segment. The Lumenal portion of the chain corresponds to 574 to 592 (RYHIHPIDQNSEKYTWAYK). A helical transmembrane segment spans residues 593–614 (SLIYLVSISITVVTTSTAAMLW). The Cytoplasmic segment spans residues 615–704 (NKKKYYAKND…LHFESISFSW (90 aa)).

The protein belongs to the ferric reductase (FRE) family. FAD serves as cofactor. As to expression, expressed in siliques. Detected in roots.

The protein localises to the membrane. The catalysed reaction is 2 a Fe(II)-siderophore + NAD(+) + H(+) = 2 a Fe(III)-siderophore + NADH. Ferric chelate reductase involved in iron reduction in roots. May participate in the transport of electrons to a Fe(3+) ion via FAD and heme intermediates. The sequence is that of Probable ferric reduction oxidase 1 (FRO1) from Arabidopsis thaliana (Mouse-ear cress).